Reading from the N-terminus, the 198-residue chain is Type II secretion system protein J (198 aa).

Positions 1–7 are cleaved as a propeptide — leader sequence; the sequence is MIRRSSG. Phe8 bears the N-methylphenylalanine mark. Residues 8–28 traverse the membrane as a helical segment; sequence FTLVEMLLALAILAALSVAAV.

It belongs to the GSP J family. In terms of assembly, type II secretion is composed of four main components: the outer membrane complex, the inner membrane complex, the cytoplasmic secretion ATPase and the periplasm-spanning pseudopilus. Interacts with core component PulG. In terms of processing, cleaved by prepilin peptidase. Methylated by prepilin peptidase at the amino group of the N-terminal phenylalanine once the leader sequence is cleaved by prepilin peptidase.

It is found in the cell inner membrane. In terms of biological role, component of the type II secretion system required for the energy-dependent secretion of extracellular factors such as proteases and toxins from the periplasm. Part of the pseudopilus tip complex that is critical for the recognition and binding of secretion substrates. The chain is Type II secretion system protein J (pulJ) from Klebsiella pneumoniae.